We begin with the raw amino-acid sequence, 354 residues long: DNA integrity scanning protein DisA (354 aa).

Residues 6–144 (GMKIKDTLKI…GDIKYVLRDS (139 aa)) enclose the DAC domain. Residues Gly73, Leu91, and 104 to 108 (TRHRT) contribute to the ATP site.

Belongs to the DisA family. As to quaternary structure, homooctamer. It depends on Mg(2+) as a cofactor.

It carries out the reaction 2 ATP = 3',3'-c-di-AMP + 2 diphosphate. Its function is as follows. Participates in a DNA-damage check-point that is active prior to asymmetric division when DNA is damaged. DisA forms globular foci that rapidly scan along the chromosomes during sporulation, searching for lesions. When a lesion is present, DisA pauses at the lesion site. This triggers a cellular response that culminates in a temporary block in sporulation initiation. Functionally, also has diadenylate cyclase activity, catalyzing the condensation of 2 ATP molecules into cyclic di-AMP (c-di-AMP). c-di-AMP acts as a signaling molecule that couples DNA integrity with progression of sporulation. The rise in c-di-AMP level generated by DisA while scanning the chromosome, operates as a positive signal that advances sporulation; upon encountering a lesion, the DisA focus arrests at the damaged site and halts c-di-AMP synthesis. The polypeptide is DNA integrity scanning protein DisA (Clostridium botulinum (strain Eklund 17B / Type B)).